Consider the following 535-residue polypeptide: Dual specificity calcium/calmodulin-dependent 3',5'-cyclic nucleotide phosphodiesterase 1A (535 aa).

2 calmodulin-binding regions span residues Thr-24–Arg-44 and Glu-114–Lys-137. The 381-residue stretch at Val-142–Glu-522 folds into the PDEase domain. His-219 acts as the Proton donor in catalysis. His-223, His-259, Asp-260, and Asp-366 together coordinate Zn(2+). Mg(2+) is bound at residue Asp-260.

Belongs to the cyclic nucleotide phosphodiesterase family. PDE1 subfamily. As to quaternary structure, homodimer. Interacts with YWHAZ. Zn(2+) is required as a cofactor. The cofactor is Mg(2+). As to expression, several tissues, including brain, kidney, testes and heart.

The catalysed reaction is a nucleoside 3',5'-cyclic phosphate + H2O = a nucleoside 5'-phosphate + H(+). The enzyme catalyses 3',5'-cyclic GMP + H2O = GMP + H(+). It carries out the reaction 3',5'-cyclic AMP + H2O = AMP + H(+). Type I PDE are activated by the binding of calmodulin in the presence of Ca(2+). Its function is as follows. Calcium/calmodulin-dependent cyclic nucleotide phosphodiesterase with a dual specificity for the second messengers cGMP and cAMP, which are key regulators of many important physiological processes. Has a higher efficiency with cGMP compared to cAMP. This chain is Dual specificity calcium/calmodulin-dependent 3',5'-cyclic nucleotide phosphodiesterase 1A, found in Homo sapiens (Human).